A 1009-amino-acid chain; its full sequence is Probable beta-galactosidase B (1009 aa).

The first 27 residues, 1–27 (MKTIAGLSWISALSSLASLPNGLGVSA), serve as a signal peptide directing secretion. Y96 lines the substrate pocket. N-linked (GlcNAc...) asparagine glycosylation occurs at N106. Substrate is bound by residues N141, A142, E143, and N201. E202 (proton donor) is an active-site residue. Residue Y271 participates in substrate binding. C277 and C330 are disulfide-bonded. E314 (nucleophile) is an active-site residue. Substrate is bound at residue Y379. 12 N-linked (GlcNAc...) asparagine glycosylation sites follow: N467, N495, N547, N593, N632, N672, N707, N775, N782, N789, N795, and N914.

The protein belongs to the glycosyl hydrolase 35 family.

The protein localises to the secreted. It carries out the reaction Hydrolysis of terminal non-reducing beta-D-galactose residues in beta-D-galactosides.. Cleaves beta-linked terminal galactosyl residues from gangliosides, glycoproteins, and glycosaminoglycans. This is Probable beta-galactosidase B (lacB) from Pyrenophora tritici-repentis (strain Pt-1C-BFP) (Wheat tan spot fungus).